A 300-amino-acid polypeptide reads, in one-letter code: Putative S-adenosyl-L-methionine-dependent methyltransferase MAB_4328c (300 aa).

S-adenosyl-L-methionine contacts are provided by residues aspartate 126 and 155 to 156 (DL).

This sequence belongs to the UPF0677 family.

Its function is as follows. Exhibits S-adenosyl-L-methionine-dependent methyltransferase activity. The polypeptide is Putative S-adenosyl-L-methionine-dependent methyltransferase MAB_4328c (Mycobacteroides abscessus (strain ATCC 19977 / DSM 44196 / CCUG 20993 / CIP 104536 / JCM 13569 / NCTC 13031 / TMC 1543 / L948) (Mycobacterium abscessus)).